The chain runs to 450 residues: MMDKRTSEIEFHLKNLLACDAYKLSHRLMYPQDTQNLYSMLTARGVYGDFKEFVWNHDFAKEILLNVFNGFVNSVIEVKKNKLLAAALTDKLVSVFNDHELANEFTQHICHLASFLEKNKKMPLVAKIHESDQSLPFRTPLITIEGVENIPNNFVWLVNYFETVLLENIWLFQTASTVAKRIKSLLEKYAKETADETSFINFQCHDFSMRGMSSLQSALYVARAHLQYFTGSDTILGGDNSRSILASEHSVMCADGSKHELKTFQRLLEKFKDKKLSLVIDSYDMWNVLDNIIPRLKNLILMRGATLYLRADSGNYQTLICNPNYKKQDKSTWAMIDYLDHHFSSTINKKGYKVLNKKIGIIYGDGITYQKIEWILNCLKNHGYCSSNIIFGVGSSTYQNLNRDTLGFVYKLTAIKRNNRWIGVKKTPITDLSKSSKGGRYKTKRLITVY.

R210 is a binding site for diphosphate. D233 serves as a coordination point for beta-nicotinamide D-ribonucleotide. Diphosphate contacts are provided by H249 and R310. Beta-nicotinamide D-ribonucleotide contacts are provided by residues 310–312, 364–365, and R403; these read RAD and GD.

The protein belongs to the NAPRTase family.

It catalyses the reaction beta-nicotinamide D-ribonucleotide + diphosphate = 5-phospho-alpha-D-ribose 1-diphosphate + nicotinamide + H(+). Its pathway is cofactor biosynthesis; NAD(+) biosynthesis; nicotinamide D-ribonucleotide from 5-phospho-alpha-D-ribose 1-diphosphate and nicotinamide: step 1/1. Its function is as follows. Catalyzes the condensation of nicotinamide with 5-phosphoribosyl-1-pyrophosphate to yield nicotinamide mononucleotide, an intermediate in the biosynthesis of NAD. This chain is Nicotinamide phosphoribosyltransferase, found in Mycoplasma genitalium (strain ATCC 33530 / DSM 19775 / NCTC 10195 / G37) (Mycoplasmoides genitalium).